Reading from the N-terminus, the 332-residue chain is Nicotianamine synthase 1 (332 aa).

It belongs to the nicotianamine synthase (NAS)-like family. In terms of tissue distribution, expressed in roots.

It catalyses the reaction 3 S-adenosyl-L-methionine = nicotianamine + 3 S-methyl-5'-thioadenosine + 3 H(+). Its function is as follows. Synthesizes nicotianamine, a polyamine that is the first intermediate in the synthesis of the phytosiderophores of the mugineic acid type found in gramineae which serve as a sensor for the physiological iron status within the plant, and/or might be involved in the transport of iron. This Oryza sativa subsp. indica (Rice) protein is Nicotianamine synthase 1 (NAS1).